A 184-amino-acid polypeptide reads, in one-letter code: ATP synthase subunit b, chloroplastic (184 aa).

A helical transmembrane segment spans residues 27 to 49 (LATNPINLSVVLGVLIFFGKGVL).

The protein belongs to the ATPase B chain family. In terms of assembly, F-type ATPases have 2 components, F(1) - the catalytic core - and F(0) - the membrane proton channel. F(1) has five subunits: alpha(3), beta(3), gamma(1), delta(1), epsilon(1). F(0) has four main subunits: a(1), b(1), b'(1) and c(10-14). The alpha and beta chains form an alternating ring which encloses part of the gamma chain. F(1) is attached to F(0) by a central stalk formed by the gamma and epsilon chains, while a peripheral stalk is formed by the delta, b and b' chains.

Its subcellular location is the plastid. It is found in the chloroplast thylakoid membrane. F(1)F(0) ATP synthase produces ATP from ADP in the presence of a proton or sodium gradient. F-type ATPases consist of two structural domains, F(1) containing the extramembraneous catalytic core and F(0) containing the membrane proton channel, linked together by a central stalk and a peripheral stalk. During catalysis, ATP synthesis in the catalytic domain of F(1) is coupled via a rotary mechanism of the central stalk subunits to proton translocation. In terms of biological role, component of the F(0) channel, it forms part of the peripheral stalk, linking F(1) to F(0). This chain is ATP synthase subunit b, chloroplastic, found in Lepidium virginicum (Virginia pepperweed).